We begin with the raw amino-acid sequence, 280 residues long: Cell division control protein 2 homolog B (280 aa).

Residues 1–5 (AYGVV) and lysine 20 each bind ATP. One can recognise a Protein kinase domain in the interval 1–274 (AYGVVYKARD…AKKALEHEYF (274 aa)). Tyrosine 2 carries the post-translational modification Phosphotyrosine. The active-site Proton acceptor is aspartate 114. The residue at position 148 (threonine 148) is a Phosphothreonine; by CAK.

Belongs to the protein kinase superfamily. CMGC Ser/Thr protein kinase family. CDC2/CDKX subfamily.

The catalysed reaction is L-seryl-[protein] + ATP = O-phospho-L-seryl-[protein] + ADP + H(+). It carries out the reaction L-threonyl-[protein] + ATP = O-phospho-L-threonyl-[protein] + ADP + H(+). The enzyme catalyses [DNA-directed RNA polymerase] + ATP = phospho-[DNA-directed RNA polymerase] + ADP + H(+). Phosphorylation at Tyr-2 inactivates the enzyme, while phosphorylation at Thr-148 activates it. In terms of biological role, plays a key role in the control of the eukaryotic cell cycle. This Antirrhinum majus (Garden snapdragon) protein is Cell division control protein 2 homolog B (CDC2B).